The primary structure comprises 350 residues: Ion-translocating oxidoreductase complex subunit D (350 aa).

The next 4 membrane-spanning stretches (helical) occupy residues 37–57, 78–109, 124–144, and 158–178; these read YYFG…AYLA, ALVT…IVIV, AMAA…SWVA, and TFNS…HLAI. FMN phosphoryl threonine is present on Thr185. Helical transmembrane passes span 212–232, 239–259, 264–284, 298–318, and 319–339; these read SVGE…LVML, WHIS…GFLI, FVSP…FFIA, LIFG…GGYP, and DAVA…DYYV.

The protein belongs to the NqrB/RnfD family. In terms of assembly, the complex is composed of six subunits: RnfA, RnfB, RnfC, RnfD, RnfE and RnfG. FMN serves as cofactor.

The protein resides in the cell inner membrane. Part of a membrane-bound complex that couples electron transfer with translocation of ions across the membrane. The protein is Ion-translocating oxidoreductase complex subunit D of Shewanella frigidimarina (strain NCIMB 400).